The sequence spans 478 residues: Cytochrome c-552 (478 aa).

An N-terminal signal peptide occupies residues 1–26 (MARKTLRARRFFSLIFPFFFMTSVYA). A heme c-binding site is contributed by His-94. 3 residues coordinate heme: Cys-122, Cys-125, and Lys-126. Heme c-binding residues include Cys-160, Cys-163, His-164, Cys-209, Cys-212, and His-213. The Ca(2+) site is built by Glu-215, Tyr-216, Lys-261, and Gln-263. Position 216 (Tyr-216) interacts with substrate. His-264 is a binding site for substrate. Heme c-binding residues include His-275, Cys-282, Cys-285, His-286, His-301, Cys-314, Cys-317, His-318, and His-393.

This sequence belongs to the cytochrome c-552 family. The cofactor is Ca(2+). Heme c serves as cofactor.

The protein resides in the periplasm. It catalyses the reaction 6 Fe(III)-[cytochrome c] + NH4(+) + 2 H2O = 6 Fe(II)-[cytochrome c] + nitrite + 8 H(+). It participates in nitrogen metabolism; nitrate reduction (assimilation). In terms of biological role, catalyzes the reduction of nitrite to ammonia, consuming six electrons in the process. The protein is Cytochrome c-552 of Salmonella arizonae (strain ATCC BAA-731 / CDC346-86 / RSK2980).